The primary structure comprises 602 residues: Elongation factor 4 (602 aa).

The tr-type G domain maps to 7–189 (RNIRNFSIIA…AIVQRIPAPQ (183 aa)). GTP is bound by residues 19–24 (DHGKST) and 136–139 (NKID).

It belongs to the TRAFAC class translation factor GTPase superfamily. Classic translation factor GTPase family. LepA subfamily.

Its subcellular location is the cell inner membrane. It carries out the reaction GTP + H2O = GDP + phosphate + H(+). Functionally, required for accurate and efficient protein synthesis under certain stress conditions. May act as a fidelity factor of the translation reaction, by catalyzing a one-codon backward translocation of tRNAs on improperly translocated ribosomes. Back-translocation proceeds from a post-translocation (POST) complex to a pre-translocation (PRE) complex, thus giving elongation factor G a second chance to translocate the tRNAs correctly. Binds to ribosomes in a GTP-dependent manner. In Xylella fastidiosa (strain M12), this protein is Elongation factor 4.